We begin with the raw amino-acid sequence, 592 residues long: Arginine--tRNA ligase (592 aa).

The 'HIGH' region signature appears at 128-138 (ANPTGPLHVGH).

This sequence belongs to the class-I aminoacyl-tRNA synthetase family. As to quaternary structure, monomer.

It localises to the cytoplasm. It catalyses the reaction tRNA(Arg) + L-arginine + ATP = L-arginyl-tRNA(Arg) + AMP + diphosphate. The chain is Arginine--tRNA ligase from Hydrogenovibrio crunogenus (strain DSM 25203 / XCL-2) (Thiomicrospira crunogena).